We begin with the raw amino-acid sequence, 345 residues long: Leucine zipper protein 2 (345 aa).

The first 19 residues, Met1 to Ser19, serve as a signal peptide directing secretion. Residues Leu16–Gln211 adopt a coiled-coil conformation. Asn133 is a glycosylation site (N-linked (GlcNAc...) asparagine). Residues Leu164 to Leu192 form a leucine-zipper region. The tract at residues Pro223 to Leu345 is disordered. Basic and acidic residues predominate over residues Gly261–Arg277. A compositionally biased stretch (polar residues) spans Pro298–Leu313. Asn301 carries an N-linked (GlcNAc...) asparagine glycan.

Expression found only in the brain and spinal cord.

The protein resides in the secreted. This chain is Leucine zipper protein 2 (Luzp2), found in Mus musculus (Mouse).